The primary structure comprises 256 residues: Small ribosomal subunit protein eS1 (256 aa).

N-acetylalanine; partial is present on A2.

This sequence belongs to the eukaryotic ribosomal protein eS1 family. Component of the small ribosomal subunit. Mature ribosomes consist of a small (40S) and a large (60S) subunit. The 40S subunit contains about 33 different proteins and 1 molecule of RNA (18S). The 60S subunit contains about 49 different proteins and 3 molecules of RNA (25S, 5.8S and 5S).

Its subcellular location is the cytoplasm. This Coprinopsis cinerea (strain Okayama-7 / 130 / ATCC MYA-4618 / FGSC 9003) (Inky cap fungus) protein is Small ribosomal subunit protein eS1.